We begin with the raw amino-acid sequence, 124 residues long: Cytochrome c2 (124 aa).

Glutamine 1 carries the post-translational modification Pyrrolidone carboxylic acid. 4 residues coordinate heme c: cysteine 16, cysteine 19, histidine 20, and methionine 85.

It belongs to the cytochrome c family. In terms of processing, binds 1 heme c group covalently per subunit.

It is found in the periplasm. Functionally, cytochrome c2 is found mainly in purple, non-sulfur, photosynthetic bacteria where it functions as the electron donor to the oxidized bacteriochlorophyll in the photophosphorylation pathway. However, it may also have a role in the respiratory chain and is found in some non-photosynthetic bacteria. In Afifella marina (Rhodobium marinum), this protein is Cytochrome c2.